Here is a 189-residue protein sequence, read N- to C-terminus: Potassium-transporting ATPase KdpC subunit (189 aa).

A helical membrane pass occupies residues 10-30 (ITLVFCVFFSVFYILILWLFA).

It belongs to the KdpC family. In terms of assembly, the system is composed of three essential subunits: KdpA, KdpB and KdpC.

The protein resides in the cell inner membrane. In terms of biological role, part of the high-affinity ATP-driven potassium transport (or Kdp) system, which catalyzes the hydrolysis of ATP coupled with the electrogenic transport of potassium into the cytoplasm. This subunit acts as a catalytic chaperone that increases the ATP-binding affinity of the ATP-hydrolyzing subunit KdpB by the formation of a transient KdpB/KdpC/ATP ternary complex. This Bacteroides thetaiotaomicron (strain ATCC 29148 / DSM 2079 / JCM 5827 / CCUG 10774 / NCTC 10582 / VPI-5482 / E50) protein is Potassium-transporting ATPase KdpC subunit.